Here is a 1755-residue protein sequence, read N- to C-terminus: E3 ubiquitin-protein ligase UBR2 (1755 aa).

At alanine 2 the chain carries N-acetylalanine. Residue lysine 94 forms a Glycyl lysine isopeptide (Lys-Gly) (interchain with G-Cter in ubiquitin) linkage. A UBR-type zinc finger spans residues 97–168; sequence HLCGRVFKVG…EGPYCQKHKL (72 aa). Residues cysteine 99, cysteine 112, cysteine 115, cysteine 124, cysteine 127, histidine 133, and histidine 136 each coordinate Zn(2+). A peptide is bound at residue phenylalanine 148. Zn(2+) is bound at residue cysteine 149. An a peptide-binding site is contributed by aspartate 150. Cysteine 151 is a binding site for Zn(2+). Aspartate 153 lines the a peptide pocket. Residue lysine 158 forms a Glycyl lysine isopeptide (Lys-Gly) (interchain with G-Cter in ubiquitin) linkage. Cysteine 163 is a binding site for Zn(2+). Lysine 165 is covalently cross-linked (Glycyl lysine isopeptide (Lys-Gly) (interchain with G-Cter in ubiquitin)). Residue histidine 166 coordinates Zn(2+). Residues lysine 248, lysine 255, and lysine 470 each participate in a glycyl lysine isopeptide (Lys-Gly) (interchain with G-Cter in ubiquitin) cross-link. Serine 476 carries the phosphoserine modification. Residues lysine 488, lysine 568, lysine 779, and lysine 789 each participate in a glycyl lysine isopeptide (Lys-Gly) (interchain with G-Cter in ubiquitin) cross-link. Residues 1012–1033 form a disordered region; sequence AEAEGTIMEESSRDKDKAERKR. Positions 1019 to 1054 form a coiled coil; sequence MEESSRDKDKAERKRKAEIARLRREKIMAQMSEMQR. The span at 1021-1033 shows a compositional bias: basic and acidic residues; that stretch reads ESSRDKDKAERKR. Zn(2+) contacts are provided by cysteine 1108, cysteine 1111, cysteine 1168, histidine 1170, histidine 1173, cysteine 1176, cysteine 1210, and cysteine 1213. An RING-type; atypical zinc finger spans residues 1108 to 1214; that stretch reads CILCQEEQEV…NGEFLCPLCE (107 aa). Glycyl lysine isopeptide (Lys-Gly) (interchain with G-Cter in ubiquitin) cross-links involve residues lysine 1496, lysine 1599, and lysine 1689. Serine 1694 carries the post-translational modification Phosphoserine. Tyrosine 1697 carries the phosphotyrosine modification.

This sequence belongs to the E3 ubiquitin-protein ligase UBR1-like family. In terms of assembly, interacts with UBE2B; promotes the UBE2B-H2A interaction and the ubiquitination of histone H2A by UBE2B and UBR2. Interacts with RECQL4. Interacts with Tex19.1 and Tex19.2; does not lead to Tex19.1 degradation and stabilizes it. Interacts with L1RE1. Interacts with CASP8. Interacts with ATXN3. Interacts with UBE2O. Dephosphorylated by DUSP22 at Ser-1694 and Tyr-1697, leading to subsequent ubiquitination and proteasomal degradation. In terms of processing, 'Lys-48'-linked ubiquitinated at Lys-94, Lys-779 and Lys-1599 following DUSP22-mediated dephosphorylation of Ser-1694 and Tyr-1697 which promotes UBR2 interaction with the SCF(FBW1A) E3 ubiquitin-protein ligase complex. As to expression, highly expressed in skeletal muscle. Also expressed in heart, kidney and testis. Expressed in acinar cells of the pancreas. In testes, expressed primarily in spermatocytes. Expressed in cerebellum.

It localises to the nucleus. It is found in the chromosome. The catalysed reaction is S-ubiquitinyl-[E2 ubiquitin-conjugating enzyme]-L-cysteine + [acceptor protein]-L-lysine = [E2 ubiquitin-conjugating enzyme]-L-cysteine + N(6)-ubiquitinyl-[acceptor protein]-L-lysine.. The protein operates within protein modification; protein ubiquitination. Its function is as follows. E3 ubiquitin-protein ligase which is a component of the N-end rule pathway. Recognizes and binds to proteins bearing specific N-terminal residues (N-degrons) that are destabilizing according to the N-end rule, leading to their ubiquitination and subsequent degradation. Recognizes both type-1 and type-2 N-degrons, containing positively charged amino acids (Arg, Lys and His) and bulky and hydrophobic amino acids, respectively. Does not ubiquitinate proteins that are acetylated at the N-terminus. In contrast, it strongly binds methylated N-degrons. Plays a critical role in chromatin inactivation and chromosome-wide transcriptional silencing during meiosis via ubiquitination of histone H2A. Binds leucine and is a negative regulator of the leucine-mTOR signaling pathway, thereby controlling cell growth. Required for spermatogenesis, promotes, with Tex19.1, SPO11-dependent recombination foci to accumulate and drive robust homologous chromosome synapsis. Polyubiquitinates LINE-1 retrotransposon encoded, LIRE1, which induces degradation, inhibiting LINE-1 retrotransposon mobilization. Catalyzes ubiquitination and degradation of the N-terminal part of NLRP1B following NLRP1B activation by pathogens and other damage-associated signals: ubiquitination promotes degradation of the N-terminal part and subsequent release of the cleaved C-terminal part of NLRP1B, which polymerizes and forms the NLRP1B inflammasome followed by host cell pyroptosis. Plays a role in T-cell receptor signaling by inducing 'Lys-63'-linked ubiquitination of lymphocyte cell-specific kinase LCK. This activity is regulated by DUSP22, which induces 'Lys-48'-linked ubiquitination of UBR2, leading to its proteasomal degradation by SCF E3 ubiquitin-protein ligase complex. This is E3 ubiquitin-protein ligase UBR2 from Mus musculus (Mouse).